A 541-amino-acid chain; its full sequence is Chaperonin GroEL (541 aa).

Residues 30 to 33 (TLGP), Lys51, 87 to 91 (DGTTT), Gly415, 479 to 481 (NAA), and Asp495 each bind ATP.

It belongs to the chaperonin (HSP60) family. Forms a cylinder of 14 subunits composed of two heptameric rings stacked back-to-back. Interacts with the co-chaperonin GroES.

The protein resides in the cytoplasm. It catalyses the reaction ATP + H2O + a folded polypeptide = ADP + phosphate + an unfolded polypeptide.. Its function is as follows. Together with its co-chaperonin GroES, plays an essential role in assisting protein folding. The GroEL-GroES system forms a nano-cage that allows encapsulation of the non-native substrate proteins and provides a physical environment optimized to promote and accelerate protein folding. This is Chaperonin GroEL from Acinetobacter baumannii (strain SDF).